The chain runs to 1381 residues: Protein HEG homolog 1 (1381 aa).

A signal peptide spans 1–29; sequence MASPRASRWPPPLLLLLLPLLLLPPAAPG. The interval 24–108 is disordered; that stretch reads PPAAPGTRDP…APRGGSADAA (85 aa). Residues 25–37 show a composition bias toward pro residues; that stretch reads PAAPGTRDPPPSP. Topologically, residues 30 to 1248 are extracellular; that stretch reads TRDPPPSPAR…GLNCGNPYQL (1219 aa). The segment covering 38 to 52 has biased composition (low complexity); the sequence is ARRALSLAPLAGAGL. Positions 55–74 are enriched in basic and acidic residues; the sequence is QLERRPEREPPPTPPRERRG. An O-linked (GalNAc...) threonine glycan is attached at Thr-67. The span at 93-105 shows a compositional bias: low complexity; the sequence is RGPSGRAPRGGSA. Residues Asn-123, Asn-159, Asn-180, and Asn-314 are each glycosylated (N-linked (GlcNAc...) asparagine). Over residues 301–316 the composition is skewed to low complexity; the sequence is DLSSSSESTEKLNNST. Disordered regions lie at residues 301-325 and 376-447; these read DLSS…SVSQ and PSAV…RSVA. Polar residues predominate over residues 424 to 444; the sequence is LASSSEVQNGSPMSQTETVSR. Asn-462, Asn-520, and Asn-610 each carry an N-linked (GlcNAc...) asparagine glycan. The disordered stretch occupies residues 491–529; that stretch reads STVQSGGSHTALGDRSYSESSSTSSSESLNSSAPRGERS. Low complexity predominate over residues 508–522; sequence SESSSTSSSESLNSS. Disordered regions lie at residues 612–680, 706–757, and 774–830; these read SSYD…PLPS, SDAS…PVTS, and QTAD…TLPA. A compositionally biased stretch (polar residues) spans 620–648; that stretch reads QPSTESPVLHTSNLPSYTPTINMPNTSVV. 2 stretches are compositionally biased toward low complexity: residues 657–680 and 706–748; these read SDSS…PLPS and SDAS…PVLP. Composition is skewed to polar residues over residues 774–784 and 792–809; these read QTADLKSQSTP and ESKS…TKAV. Residues 810-825 are compositionally biased toward low complexity; it reads TTNSPLPPSLTESSTE. Positions 985–1023 constitute an EGF-like 1 domain; that stretch reads SVNSCAVNPCLHNGECVADNTSRGYHCRCPPSWQGDDCS. Intrachain disulfides connect Cys-989/Cys-1000, Cys-994/Cys-1011, Cys-1013/Cys-1022, Cys-1029/Cys-1040, Cys-1034/Cys-1049, and Cys-1051/Cys-1062. Residues 1025–1063 enclose the EGF-like 2; calcium-binding domain; that stretch reads DVNECLSNPCPSTAMCNNTQGSFICKCPVGYQLEKGICN. N-linked (GlcNAc...) asparagine glycosylation is present at Asn-1137. Residues 1249–1269 traverse the membrane as a helical segment; it reads ITVVIAAAGGGLLLILGIALI. The Cytoplasmic portion of the chain corresponds to 1270-1381; it reads VTCCRKNKND…SDESRRRDYF (112 aa). Ser-1359 is subject to Phosphoserine.

In terms of assembly, interacts with CCM2 and KRIT1; KRIT1 markedly facilitates interaction with CCM2.

The protein localises to the cell membrane. The protein resides in the cell junction. It localises to the secreted. Receptor component of the CCM signaling pathway which is a crucial regulator of heart and vessel formation and integrity. May act through the stabilization of endothelial cell junctions. The polypeptide is Protein HEG homolog 1 (HEG1) (Homo sapiens (Human)).